Consider the following 732-residue polypeptide: Elongation factor 2 (732 aa).

The tr-type G domain maps to 19–260 (ERIRNIDIAA…MVIKNLPNPR (242 aa)). Residues 28 to 35 (AHIDHGKT), 94 to 98 (DTPGH), and 148 to 151 (NKVD) each bind GTP. Diphthamide is present on histidine 598.

It belongs to the TRAFAC class translation factor GTPase superfamily. Classic translation factor GTPase family. EF-G/EF-2 subfamily.

Its subcellular location is the cytoplasm. Catalyzes the GTP-dependent ribosomal translocation step during translation elongation. During this step, the ribosome changes from the pre-translocational (PRE) to the post-translocational (POST) state as the newly formed A-site-bound peptidyl-tRNA and P-site-bound deacylated tRNA move to the P and E sites, respectively. Catalyzes the coordinated movement of the two tRNA molecules, the mRNA and conformational changes in the ribosome. The sequence is that of Elongation factor 2 from Picrophilus torridus (strain ATCC 700027 / DSM 9790 / JCM 10055 / NBRC 100828 / KAW 2/3).